The chain runs to 692 residues: UvrABC system protein B (692 aa).

Residues 32–418 form the Helicase ATP-binding domain; that stretch reads DNIENGEKAQ…QTDTIVEQII (387 aa). Position 45 to 52 (45 to 52) interacts with ATP; the sequence is GATGTGKT. Positions 98–121 match the Beta-hairpin motif; it reads YYDYYQPEAYVPSSDTYIEKDSSV. The Helicase C-terminal domain maps to 436 to 631; the sequence is QIDDLVGEIH…TIKKEIRDLI (196 aa). One can recognise a UVR domain in the interval 656–691; the sequence is KALVKKLEKEMQQAASALDFEGAAQLRDMVLELRAM.

The protein belongs to the UvrB family. As to quaternary structure, forms a heterotetramer with UvrA during the search for lesions. Interacts with UvrC in an incision complex.

The protein localises to the cytoplasm. In terms of biological role, the UvrABC repair system catalyzes the recognition and processing of DNA lesions. A damage recognition complex composed of 2 UvrA and 2 UvrB subunits scans DNA for abnormalities. Upon binding of the UvrA(2)B(2) complex to a putative damaged site, the DNA wraps around one UvrB monomer. DNA wrap is dependent on ATP binding by UvrB and probably causes local melting of the DNA helix, facilitating insertion of UvrB beta-hairpin between the DNA strands. Then UvrB probes one DNA strand for the presence of a lesion. If a lesion is found the UvrA subunits dissociate and the UvrB-DNA preincision complex is formed. This complex is subsequently bound by UvrC and the second UvrB is released. If no lesion is found, the DNA wraps around the other UvrB subunit that will check the other stand for damage. This Lactococcus lactis subsp. lactis (strain IL1403) (Streptococcus lactis) protein is UvrABC system protein B.